Here is an 833-residue protein sequence, read N- to C-terminus: Leucine--tRNA ligase (833 aa).

The 'HIGH' region motif lies at 41-52; sequence PYPSGAGLHVGH. The 'KMSKS' region signature appears at 610–614; that stretch reads KMSKS. Lysine 613 contacts ATP.

It belongs to the class-I aminoacyl-tRNA synthetase family.

It is found in the cytoplasm. The catalysed reaction is tRNA(Leu) + L-leucine + ATP = L-leucyl-tRNA(Leu) + AMP + diphosphate. The sequence is that of Leucine--tRNA ligase from Streptococcus pyogenes serotype M6 (strain ATCC BAA-946 / MGAS10394).